We begin with the raw amino-acid sequence, 54 residues long: Light-harvesting protein B-870 beta chain (54 aa).

Topologically, residues 1–20 are cytoplasmic; it reads EVKQESLSGITEGEAKEFHK. A bacteriochlorophyll-binding residues include histidine 19 and histidine 37. Residues 21 to 43 traverse the membrane as a helical segment; it reads IFTSSILVFFGVAAFAHLLVWIW. At 44–54 the chain is on the periplasmic side; it reads RPWVPGPNGYS.

Belongs to the antenna complex beta subunit family. The core complex is formed by different alpha and beta chains, binding bacteriochlorophyll molecules, and arranged most probably in tetrameric structures disposed around the reaction center. The non-pigmented gamma chains may constitute additional components.

It localises to the cell inner membrane. In terms of biological role, antenna complexes are light-harvesting systems, which transfer the excitation energy to the reaction centers. In Rhodospirillum rubrum, this protein is Light-harvesting protein B-870 beta chain.